The following is a 1193-amino-acid chain: Kinesin-related protein 3 (1193 aa).

One can recognise a Kinesin motor domain in the interval 3–329 (SIRVVCRFRP…LRFGSRAKNI (327 aa)). 85–92 (GQTGSGKT) is an ATP binding site. 7 disordered regions span residues 377–429 (KSSG…SSNV), 573–600 (SSIASLVPSTPKSSAEMDPLATASKHAD), 611–630 (LLQRTPSKAVGSSKSNTATS), 638–665 (ISESDNIGSGATTTTNNNNATITPATSS), 973–1016 (GGGG…SANL), 1032–1114 (KAEP…PVKI), and 1127–1193 (FKKK…QQKD). The span at 405–429 (SSNLSNSVNSTSNLNTSSNTSSSNV) shows a compositional bias: low complexity. Residues 450–962 (ELIKVLQEKC…SQVGVDAQNT (513 aa)) are a coiled coil. 2 stretches are compositionally biased toward polar residues: residues 573-585 (SSIASLVPSTPKS) and 614-630 (RTPSKAVGSSKSNTATS). Composition is skewed to low complexity over residues 643 to 665 (NIGSGATTTTNNNNATITPATSS) and 985 to 1006 (HSSSSSTSSSSALNHSSINNNH). Residues 1007–1016 (TTPTPLSANL) show a composition bias toward polar residues. 3 stretches are compositionally biased toward low complexity: residues 1044-1078 (NTSIPSSPNHTSSNNINNNSNNNNNNNNNNNIGNS), 1086-1109 (NNNSSISNSNNNSSSNLNANLNGN), and 1132-1149 (PSSTPPSSTNNLSPQSPQ). Composition is skewed to polar residues over residues 1150–1165 (TPSHLSADGSGNISPN) and 1174–1193 (FSYTPAVVTSSTINKDQQKD).

The protein belongs to the TRAFAC class myosin-kinesin ATPase superfamily. Kinesin family. Kinesin subfamily. As to quaternary structure, dimer.

It localises to the cytoplasm. It is found in the cytoskeleton. Its function is as follows. Microtubule-associated force-producing protein that plays a role in organelle transport. Its motor activity is directed toward the microtubule's plus end. The maximal velocity in an inverted motility assay (moving microtubules on fixed motors) was 1.96 um/s. In Dictyostelium discoideum (Social amoeba), this protein is Kinesin-related protein 3 (kif3).